The sequence spans 329 residues: MQGSVTEFLKPHLVDIEQVSPTHAKVILEPLERGFGHTLGNALRRILLSSMPGCAVTEVEIDGVLHEYSSKEGVQEDILEVLLNLKGLAVKVQNKDDVFLTLNKSGIGPVVAADITHDGDVEIVNPEHVICHLTDENASINMRIRVQRGRGYVPASARVHAQDEERPIGRLLVDACYSPVDRIAYNVEAARVEQRTDLDKLVIELETNGAIDPEEAIRRAATILAEQLDAFVDLRDVRQPEVKEEKPEFDPILLRPVDDLELTVRSANCLKAETIHYIGDLVQRTEVELLKTPNLGKKSLTEIKDVLASRGLSLGMRLENWPPASIAED.

The segment at 1 to 235 (MQGSVTEFLK…EQLDAFVDLR (235 aa)) is alpha N-terminal domain (alpha-NTD). The interval 249–329 (FDPILLRPVD…NWPPASIAED (81 aa)) is alpha C-terminal domain (alpha-CTD).

This sequence belongs to the RNA polymerase alpha chain family. Homodimer. The RNAP catalytic core consists of 2 alpha, 1 beta, 1 beta' and 1 omega subunit. When a sigma factor is associated with the core the holoenzyme is formed, which can initiate transcription.

It carries out the reaction RNA(n) + a ribonucleoside 5'-triphosphate = RNA(n+1) + diphosphate. Its function is as follows. DNA-dependent RNA polymerase catalyzes the transcription of DNA into RNA using the four ribonucleoside triphosphates as substrates. The chain is DNA-directed RNA polymerase subunit alpha from Mannheimia succiniciproducens (strain KCTC 0769BP / MBEL55E).